The primary structure comprises 616 residues: MLLQIAEPGQSAVPHQHKLAVGIDLGTTNSLVASVRSGEAKTLPDMKGNVILPSVVQYQEDKICVGMNAYQSAAMDPQNTIISVKRLMGRSLKDIQARYPELPYQFSESENGLPVIQTAQGEVNPIQVSSEILKSLSRRAQDTLGGELEGVVITVPAYFDDAQRAGTKDAATLAGLNVLRLLNEPTAAAIAYGLDSGQEGVIAVYDLGGGTFDISILRLSKGVFEVLATGGDSALGGDDFDHVLAQWIKEQAGITSPLSSQEQRELLTLATQTKVALSDSDNVKISFKDWSGEISVELFNSLIQPLIKKTLMACRRALKDADITSEEVMEVVMVGGSTRTPFVRTSVGDYFGQTPLTSIDPDQVVAIGAAIQADILVGNKPDSEMLLLDVIPLSLGIETMGGLVEKIIPRNTTIPVAKAQEFTTFKDGQTGMMVHVVQGEREMVEDGRSLARFSLKGIPPMAAGAAHIRVTYQVDADGLLSVTAMEKSTGVQSHIQVKPSYGLSDNEVANMLKDSMTYAKEDMKARALAEQQVEADRVIEGLVVALNNDGDALLSKEEQAEILQAIEALITLRQGTDAQAIEDGIKKADEASQEFAARRMDASIRAALAGQSIDEV.

The protein belongs to the heat shock protein 70 family.

In terms of biological role, chaperone involved in the maturation of iron-sulfur cluster-containing proteins. Has a low intrinsic ATPase activity which is markedly stimulated by HscB. This is Chaperone protein HscA homolog from Aliivibrio fischeri (strain ATCC 700601 / ES114) (Vibrio fischeri).